The primary structure comprises 205 residues: Endothelial cell-specific chemotaxis regulator (205 aa).

Residues 1–24 (MGTAGAMQLCWVILGFLLFRGHNS) form the signal peptide. Over 25 to 124 (QPTMTQTSSS…TSETVLTVAA (100 aa)) the chain is Extracellular. Polar residues-rich tracts occupy residues 49 to 71 (SSNPGYIPSSEANRPSHLSSTGT) and 86 to 101 (SRDTFQTVPPNSTTMS). Residues 49–101 (SSNPGYIPSSEANRPSHLSSTGTPGAGVPSSGRDGGTSRDTFQTVPPNSTTMS) are disordered. A helical transmembrane segment spans residues 125-145 (FGVISFIVILVVVVIILVGVV). The Cytoplasmic portion of the chain corresponds to 146-205 (SLRFKCRKSKESEDPQKPGSSGLSESCSTANGEKDSITLISMKNINMNNGKQSLSAEKVL). The interval 153-175 (KSKESEDPQKPGSSGLSESCSTA) is disordered. Residues 163–175 (PGSSGLSESCSTA) show a composition bias toward polar residues. Phosphoserine is present on serine 198.

It belongs to the ECSCR family. Interacts with FLNA. Interacts with the 20S proteasome subunit PSMA7. In terms of processing, may be heavily O-glycosylated. In terms of tissue distribution, highest expression in endothelial cells. Also detected in vascular smooth muscle, macrophages, lymphocytes, and mast cells.

The protein localises to the cell membrane. It is found in the cytoplasm. Regulates endothelial chemotaxis and tube formation. Has a role in angiogenesis and apoptosis via modulation of the actin cytoskeleton and facilitation of proteasomal degradation of the apoptosis inhibitors BIRC3/IAP1 and BIRC2/IAP2. The protein is Endothelial cell-specific chemotaxis regulator (ECSCR) of Homo sapiens (Human).